Consider the following 544-residue polypeptide: Major royal jelly protein 3 (544 aa).

Positions 1–20 (MTKWLLLVVCLGIACQDVTS) are cleaved as a signal peptide. A glycan (N-linked (GlcNAc...) asparagine) is linked at asparagine 183. Residues 421 to 544 (RYHNQNAGNQ…NQVHHSSKLH (124 aa)) are disordered. 20 repeat units span residues 424-428 (NQNAG), 429-433 (NQNAD), 434-438 (NQNAD), 439-443 (NQNAN), 444-448 (NQNAD), 449-453 (NQNAN), 454-458 (KQNGN), 459-463 (RQNDN), 464-468 (RQNDN), 469-473 (KQNGN), 474-478 (RQNDN), 479-483 (KQNGN), 484-488 (RQNDN), 489-493 (KQNGN), 494-498 (RQNGN), 499-503 (KQNDN), 504-508 (KQNGN), 509-513 (RQNDN), 514-518 (KRNGN), and 519-523 (RQNDN). Low complexity-rich tracts occupy residues 424-460 (NQNAGNQNADNQNADNQNANNQNADNQNANKQNGNRQ), 468-510 (NKQN…GNRQ), and 518-530 (NRQNDNQNNQNDN). Positions 424–523 (NQNAGNQNAD…KRNGNRQNDN (100 aa)) are 23 X 5 AA tandem repeats of [NKR]-[RQ]-N-[AGD]-[DNG]. One copy of the 21; half-length repeat lies at 524-525 (QN). 2 consecutive repeat copies span residues 526–530 (NQNDN) and 531–535 (NRNDN).

This sequence belongs to the major royal jelly protein family. As to quaternary structure, homoligomer; in the absence of RNA, assembles into a higher-order oligomeric form, composed of around 20 monomer units. As to expression, found in and secreted from the hypopharyngeal glands of the worker honey bee (at protein level); expression peaks at 12 days post eclosion. Expressed in the brains of worker bees. Expressed in the brains of adult worker bees peaking at 12 days post eclosion (at protein level). Expressed in the spermatheca of adult queen bees (at protein level); Expression levels are higher in mated queens than in virgin queens. Expressed in queen bee ovaries and male drone testes. Expression in the head of forager worker bees is lower than in the heads of nurse worker bees.

It is found in the secreted. Abundant protein component of royal jelly, a substance produced in the hypopharyngeal gland containing proteins, free amino acids, fatty acids, sugars and other nutrients, which is fed to developing larvae by worker nurse bees. Major royal jelly proteins (MRJPs) are high in essential amino acids and probably have a nutritional function in larval food. All larvae are fed some royal jelly (also known as worker jelly) early in their development but it forms the principal source of nutrition for larvae destined to become queen bees. Secreted RNA-binding protein required to concentrate, stabilize and enhance environmental RNA bioavailability in the honey bee royal jelly. Acts as a RNA-aggregating protein: binds 18 nucleotides and longer single- and double-stranded RNA (ssRNA and dsRNA, respectively) in a non-specific manner. RNA-binding drives super-order assembly of oligomers into extracellular ribonucleoprotein granules that concentrate, protect and enhance RNA uptake granules, facilitating RNA transfer among bees. Produced in the spermatheca of adult queen bees, along with other major royal jelly proteins, where it may act as a nutrient supply for sperm stored by mated queens, or be involved in energy metabolism. The protein is Major royal jelly protein 3 of Apis mellifera (Honeybee).